The primary structure comprises 505 residues: Monocarboxylate transporter 10 (505 aa).

Residues 1-14 (MTEPEPTLEQEPTP) are compositionally biased toward acidic residues. The segment at 1-64 (MTEPEPTLEQ…EQKSPEEFEP (64 aa)) is disordered. The Cytoplasmic portion of the chain corresponds to 1 to 66 (MTEPEPTLEQ…KSPEEFEPPE (66 aa)). Residues 15–31 (EPEPTQEPTPEPTPEPE) are compositionally biased toward pro residues. Residues 32 to 41 (PTQEPESEPE) show a composition bias toward acidic residues. A helical transmembrane segment spans residues 67 to 87 (GGWGWVVMLASMWCNGSVFGI). Over 88-114 (QNAFGIMFVYLLNEFGSEHDADLRFKT) the chain is Extracellular. A helical membrane pass occupies residues 115 to 135 (AWVGSLSMGMIFFCSPIVSVF). Residues 136 to 142 (TDLLGCR) lie on the Cytoplasmic side of the membrane. Residues 143 to 163 (ITAVGGAAVGCVGLLASSFVT) form a helical membrane-spanning segment. Topologically, residues 164 to 171 (SLGPMYFT) are extracellular. A helical transmembrane segment spans residues 172–192 (YGIVFACGCSFAYQPSLVILG). The Cytoplasmic segment spans residues 193 to 204 (HYFKRRLGLVNG). Residues 205 to 225 (IVTAGSSVFTITLPYMLSGLL) traverse the membrane as a helical segment. Residues 226 to 235 (KSVGLYHTLR) lie on the Extracellular side of the membrane. The chain crosses the membrane as a helical span at residues 236-256 (VLAIFMFILMLAGLTYKPLLP). At 257–286 (KPVSSSKPGSRCPPLSRIFNVNIWKSLGYR) the chain is on the cytoplasmic side. A helical membrane pass occupies residues 287–307 (IWAFGIPAALYGYFVPYVHLM). The Extracellular portion of the chain corresponds to 308–321 (THVEERFGPEANKE). The helical transmembrane segment at 322 to 342 (VLLACIGITSGVGRLIFGRVA) threads the bilayer. Aspartate 343 is a topological domain (cytoplasmic). Residues 344-364 (YVPGVNKVFLQVSSFMVIGVM) form a helical membrane-spanning segment. Residues 365–377 (SMMIPLCHVFGGL) are Extracellular-facing. Residues 378-400 (IAVCLLMGLFDGCFICIMAPIAF) traverse the membrane as a helical segment. At 401 to 411 (ELVGSQNVSQA) the chain is on the cytoplasmic side. A helical membrane pass occupies residues 412 to 432 (IGFLLGMMSIPMTVGPPIAGF). At 433 to 443 (LRDRLGSYDVA) the chain is on the extracellular side. The chain crosses the membrane as a helical span at residues 444-464 (FYLAGIPPLIGGAVLCAIPWV). Over 465-505 (EARRKRREAANTAENTEKMLESRSPPLEDTVCRTEEPESVI) the chain is Cytoplasmic. The segment at 474 to 505 (ANTAENTEKMLESRSPPLEDTVCRTEEPESVI) is disordered. Over residues 494 to 505 (TVCRTEEPESVI) the composition is skewed to basic and acidic residues.

It belongs to the major facilitator superfamily. Monocarboxylate porter (TC 2.A.1.13) family.

The protein localises to the cell membrane. It localises to the basolateral cell membrane. The catalysed reaction is L-tryptophan(in) = L-tryptophan(out). It catalyses the reaction L-tyrosine(in) = L-tyrosine(out). The enzyme catalyses L-phenylalanine(in) = L-phenylalanine(out). It carries out the reaction 3,3',5-triiodo-L-thyronine(out) = 3,3',5-triiodo-L-thyronine(in). The catalysed reaction is L-thyroxine(out) = L-thyroxine(in). Its function is as follows. Sodium- and proton-independent thyroid hormones and aromatic acids transporter. Mediates both uptake and efflux of 3,5,3'-triiodothyronine (T3) and 3,5,3',5'-tetraiodothyronine (T4) with high affinity, suggesting a role in the homeostasis of thyroid hormone levels. Responsible for low affinity bidirectional transport of the aromatic amino acids, such as phenylalanine, tyrosine, tryptophan and L-3,4-dihydroxyphenylalanine (L-dopa). Plays an important role in homeostasis of aromatic amino acids. In Danio rerio (Zebrafish), this protein is Monocarboxylate transporter 10 (slc16a10).